We begin with the raw amino-acid sequence, 449 residues long: Phosphoglucosamine mutase (449 aa).

The active-site Phosphoserine intermediate is the S101. Positions 101, 243, 245, and 247 each coordinate Mg(2+). S101 is subject to Phosphoserine.

The protein belongs to the phosphohexose mutase family. Requires Mg(2+) as cofactor. Post-translationally, activated by phosphorylation.

It carries out the reaction alpha-D-glucosamine 1-phosphate = D-glucosamine 6-phosphate. Its function is as follows. Catalyzes the conversion of glucosamine-6-phosphate to glucosamine-1-phosphate. The polypeptide is Phosphoglucosamine mutase (Syntrophobacter fumaroxidans (strain DSM 10017 / MPOB)).